A 654-amino-acid polypeptide reads, in one-letter code: Beta-mannosyltransferase 2 (654 aa).

Over 1 to 37 (MLAWLRHRIRSYNTSTYSSILPSASFGKVYKIGTKLN) the chain is Cytoplasmic. The chain crosses the membrane as a helical span at residues 38–58 (FTLLALCLLLACSVFFNYFYL). Topologically, residues 59 to 654 (ADNNGLDIDT…ANGNGKGSSS (596 aa)) are extracellular.

It belongs to the BMT family.

The protein resides in the membrane. Functionally, beta-mannosyltransferase involved in cell wall biosynthesis. Required for the addition of beta-mannose to the acid-labile fraction of cell wall phosphopeptidomannan. In Candida albicans (strain SC5314 / ATCC MYA-2876) (Yeast), this protein is Beta-mannosyltransferase 2 (RHD1).